A 421-amino-acid polypeptide reads, in one-letter code: Prenyltransferase asqH2 (421 aa).

The interval 1 to 28 (MDRNSFTAYGPATGAITESGEQENDHTK) is disordered. Residue Glu-105 coordinates L-tryptophan. Substrate is bound by residues Arg-119, Arg-272, Lys-274, Tyr-276, and Tyr-341.

This sequence belongs to the tryptophan dimethylallyltransferase family.

The catalysed reaction is yaequinolone E + dimethylallyl diphosphate + H2O = [(1'E)-3'-hydroxy-3',7'-dimethylocta-1',6'-dien-1'-yl]-quinolinone B + diphosphate. The protein operates within secondary metabolite biosynthesis. Its pathway is alkaloid biosynthesis. It functions in the pathway mycotoxin biosynthesis. In terms of biological role, prenyltransferase; part of the gene cluster that mediates the biosynthesis of the aspoquinolone mycotoxins. Within the pathway, the prenyltransferase asqH2 performs the second alkylation with DMAPP at delta(3') double bond to yield a carbenium ion intermediate, which can be attacked by H(2)O to yield a styrenyl quinolone containing a C3'-hydroxyprenyl chain. The first step of the pathway is catalyzed by the nonribosomal peptide synthetase asqK that condenses anthranilic acid and O-methyl-L-tyrosine to produce 4'-methoxycyclopeptin. 4'-methoxycyclopeptin is then converted to 4'-methoxydehydrocyclopeptin by the ketoglutarate-dependent dioxygenase asqJ. AsqJ also converts its first product 4'-methoxydehydrocyclopeptin to 4'-methoxycyclopenin. The following conversion of 4'-methoxycyclopenin into 4'-methoxyviridicatin is catalyzed by the cyclopenase asqI. 4'-methoxyviridicatin is the precursor of quinolone natural products, and is further converted to quinolinone B. The prenyltransferase asqH1 then catalyzes the canonical Friedel-Crafts alkylation of quinolinone B with dimethylallyl cation to yield dimethylallyl quinolone, which is subjected to FAD-dependent dehydrogenation by the FAD-linked oxidoreductase asqF to yield conjugated aryl diene. The delta(3') double bond then serves as the site of the second alkylation with DMAPP catalyzed by the prenyltransferase asqH2 to yield a carbenium ion intermediate, which can be attacked by H(2)O to yield a styrenyl quinolone containing a C3'-hydroxyprenyl chain. The FAD-dependent monooxygenase asqG performs epoxidation of the terminal C7'-C8' olefin. Finally, after dehydratation of the epoxide at C3 by asqC, the quinolone epoxide rearrangement protein asqO catalyzes an enzymatic 3-exo-tet cyclization to yield the cyclopropyl-THF ring system in aspoquinolone. In Emericella nidulans (strain FGSC A4 / ATCC 38163 / CBS 112.46 / NRRL 194 / M139) (Aspergillus nidulans), this protein is Prenyltransferase asqH2.